The primary structure comprises 565 residues: Potassium-transporting ATPase potassium-binding subunit (565 aa).

The next 12 membrane-spanning stretches (helical) occupy residues 6–26 (LMLLGLLILLLLILAPLLGSL), 63–83 (LLAILAFNLLGIVLLFALLMA), 132–152 (GLGVQNFLSAASGIAVLFALI), 175–195 (LYVLLPLSLLLSLLFVSQGVI), 250–270 (LSNLLQMVAIFLLPTALCFAF), 283–303 (LLWTMSLIFIVAAGCVMYAEL), 327–347 (FGILASALYAVVTTAASCGAV), 354–374 (FTALGGMVPMWLMQIGEVVFG), 379–399 (GLYGMLLFVLLTVFIAGLMIG), 418–438 (ALAILIPPALVLTGSAIALLC), 483–503 (LLLALVMLIGRFGVIIPVMAI), and 524–544 (GALFVSLLIGTILLVGALTFI).

It belongs to the KdpA family. The system is composed of three essential subunits: KdpA, KdpB and KdpC.

It localises to the cell inner membrane. Functionally, part of the high-affinity ATP-driven potassium transport (or Kdp) system, which catalyzes the hydrolysis of ATP coupled with the electrogenic transport of potassium into the cytoplasm. This subunit binds the periplasmic potassium ions and delivers the ions to the membrane domain of KdpB through an intramembrane tunnel. The protein is Potassium-transporting ATPase potassium-binding subunit of Edwardsiella ictaluri (strain 93-146).